Consider the following 363-residue polypeptide: Protein-glutamate methylesterase/protein-glutamine glutaminase 1 (363 aa).

Positions 7–124 constitute a Response regulatory domain; the sequence is KVLIVDDSAL…SRGMQEYARE (118 aa). D58 carries the 4-aspartylphosphate modification. The CheB-type methylesterase domain maps to 164 to 356; sequence FSSTEKIIVI…RRLFGWLESQ (193 aa). Catalysis depends on residues S176, H202, and D298.

It belongs to the CheB family. In terms of processing, phosphorylated by CheA. Phosphorylation of the N-terminal regulatory domain activates the methylesterase activity.

It is found in the cytoplasm. It catalyses the reaction [protein]-L-glutamate 5-O-methyl ester + H2O = L-glutamyl-[protein] + methanol + H(+). It carries out the reaction L-glutaminyl-[protein] + H2O = L-glutamyl-[protein] + NH4(+). Its function is as follows. Involved in chemotaxis. Part of a chemotaxis signal transduction system that modulates chemotaxis in response to various stimuli. Catalyzes the demethylation of specific methylglutamate residues introduced into the chemoreceptors (methyl-accepting chemotaxis proteins or MCP) by CheR. Also mediates the irreversible deamidation of specific glutamine residues to glutamic acid. In Geobacter metallireducens (strain ATCC 53774 / DSM 7210 / GS-15), this protein is Protein-glutamate methylesterase/protein-glutamine glutaminase 1.